We begin with the raw amino-acid sequence, 141 residues long: General odorant-binding protein 57b (141 aa).

An N-terminal signal peptide occupies residues 1–22; that stretch reads MFIYRLVFIAPLILLLFSLAKA. Intrachain disulfides connect Cys39/Cys77, Cys73/Cys120, and Cys111/Cys129.

This sequence belongs to the PBP/GOBP family.

In terms of biological role, present in the aqueous fluid surrounding olfactory sensory dendrites and are thought to aid in the capture and transport of hydrophobic odorants into and through this fluid. In Drosophila melanogaster (Fruit fly), this protein is General odorant-binding protein 57b.